The primary structure comprises 484 residues: Sperm motility kinase 2B (484 aa).

Residues tyrosine 8–valine 256 form the Protein kinase domain. ATP is bound by residues isoleucine 14–valine 22 and lysine 37. The active-site Proton acceptor is aspartate 127. The 43-residue stretch at proline 272–lysine 314 folds into the UBA domain. Polar residues-rich tracts occupy residues proline 356–serine 373 and serine 422–serine 434. 2 disordered regions span residues proline 356–histidine 400 and serine 422–lysine 450.

It belongs to the protein kinase superfamily. CAMK Ser/Thr protein kinase family. Smok subfamily. In terms of tissue distribution, testis-specific. Expressed in the testis from 22 days postpartum (22 dpp).

It carries out the reaction L-seryl-[protein] + ATP = O-phospho-L-seryl-[protein] + ADP + H(+). The enzyme catalyses L-threonyl-[protein] + ATP = O-phospho-L-threonyl-[protein] + ADP + H(+). Functionally, may play a role in sperm motility, especially in the regulation of flagellar function. This chain is Sperm motility kinase 2B, found in Mus musculus (Mouse).